We begin with the raw amino-acid sequence, 75 residues long: UPF0352 protein YejL (75 aa).

Belongs to the UPF0352 family.

This is UPF0352 protein YejL from Shigella flexneri.